The sequence spans 206 residues: Tetrathionate response regulatory protein TtrR (206 aa).

In terms of domain architecture, Response regulatory spans 3–117 (TIHLLDDDTA…PLQAALERAL (115 aa)). Position 52 is a 4-aspartylphosphate (D52). In terms of domain architecture, HTH luxR-type spans 134–194 (QQLTPKEREL…ELIRRFEKMA (61 aa)). The H-T-H motif DNA-binding region spans 153–172 (NREIAEAMNIAVRTVEVHRA).

In terms of processing, phosphorylated by TtrS.

The protein localises to the cytoplasm. Member of the two-component regulatory system TtrR/TtrS, which is required for synthesis of tetrathionate reductase. Positively regulates transcription of the ttrBCA operon. During mice infection, the ability to use tetrathionate as an electron acceptor is a growth advantage for S.typhimurium over the competing microbiota in the lumen of the inflamed gut. This Salmonella typhimurium (strain LT2 / SGSC1412 / ATCC 700720) protein is Tetrathionate response regulatory protein TtrR (ttrR).